The sequence spans 378 residues: Succinate--CoA ligase [GDP-forming] subunit beta (378 aa).

One can recognise an ATP-grasp domain in the interval 9–235 (KEILARYGVP…VEAEHPLEVE (227 aa)). Residues Lys45, 52 to 54 (GRG), Val94, and Glu99 each bind GTP. Positions 190 and 204 each coordinate Mg(2+). Substrate contacts are provided by residues Asn255 and 312 to 314 (GIT).

It belongs to the succinate/malate CoA ligase beta subunit family. In terms of assembly, heterotetramer of two alpha and two beta subunits. The cofactor is Mg(2+).

It carries out the reaction GTP + succinate + CoA = succinyl-CoA + GDP + phosphate. The catalysed reaction is succinate + ATP + CoA = succinyl-CoA + ADP + phosphate. It functions in the pathway carbohydrate metabolism; tricarboxylic acid cycle; succinate from succinyl-CoA (ligase route): step 1/1. Functionally, succinyl-CoA synthetase functions in the citric acid cycle (TCA), coupling the hydrolysis of succinyl-CoA to the synthesis of either ATP or GTP and thus represents the only step of substrate-level phosphorylation in the TCA. The beta subunit provides nucleotide specificity of the enzyme and binds the substrate succinate, while the binding sites for coenzyme A and phosphate are found in the alpha subunit. Can use either ATP or GTP, but prefers GTP. The polypeptide is Succinate--CoA ligase [GDP-forming] subunit beta (Thermus thermophilus).